Reading from the N-terminus, the 229-residue chain is Indole-3-glycerol phosphate synthase (229 aa).

Belongs to the TrpC family.

The enzyme catalyses 1-(2-carboxyphenylamino)-1-deoxy-D-ribulose 5-phosphate + H(+) = (1S,2R)-1-C-(indol-3-yl)glycerol 3-phosphate + CO2 + H2O. The protein operates within amino-acid biosynthesis; L-tryptophan biosynthesis; L-tryptophan from chorismate: step 4/5. The protein is Indole-3-glycerol phosphate synthase of Pyrococcus abyssi (strain GE5 / Orsay).